The primary structure comprises 275 residues: Small ribosomal subunit protein uS3 (275 aa).

The 69-residue stretch at 38–106 (IRKLLATGLE…QVQLNILEVK (69 aa)) folds into the KH type-2 domain. Residues 215–275 (AAAAPASDRP…AEAPAESTES (61 aa)) are disordered. Over residues 237-275 (SGSAGTTATSTEAGRAATSDAPAAGTAAAAEAPAESTES) the composition is skewed to low complexity.

This sequence belongs to the universal ribosomal protein uS3 family. In terms of assembly, part of the 30S ribosomal subunit. Forms a tight complex with proteins S10 and S14.

Functionally, binds the lower part of the 30S subunit head. Binds mRNA in the 70S ribosome, positioning it for translation. The chain is Small ribosomal subunit protein uS3 from Mycolicibacterium smegmatis (strain ATCC 700084 / mc(2)155) (Mycobacterium smegmatis).